The following is a 194-amino-acid chain: Putative 3-methyladenine DNA glycosylase (194 aa).

The protein belongs to the DNA glycosylase MPG family.

The chain is Putative 3-methyladenine DNA glycosylase from Aeropyrum pernix (strain ATCC 700893 / DSM 11879 / JCM 9820 / NBRC 100138 / K1).